The primary structure comprises 337 residues: Holliday junction branch migration complex subunit RuvB (337 aa).

A large ATPase domain (RuvB-L) region spans residues 4-185; it reads ADRLISNSFE…FGITQRLEYY (182 aa). ATP-binding positions include Ile24, Arg25, Gly66, Lys69, Thr70, Thr71, 132 to 134, Arg175, Tyr185, and Arg222; that span reads EDY. Position 70 (Thr70) interacts with Mg(2+). Residues 186 to 256 are small ATPAse domain (RuvB-S); it reads KVDDLKDIVQ…TAKKALDMLD (71 aa). Residues 259–337 are head domain (RuvB-H); it reads SSGFDYMDRK…HFGLDIPEAR (79 aa). Arg314 and Arg319 together coordinate DNA.

This sequence belongs to the RuvB family. Homohexamer. Forms an RuvA(8)-RuvB(12)-Holliday junction (HJ) complex. HJ DNA is sandwiched between 2 RuvA tetramers; dsDNA enters through RuvA and exits via RuvB. An RuvB hexamer assembles on each DNA strand where it exits the tetramer. Each RuvB hexamer is contacted by two RuvA subunits (via domain III) on 2 adjacent RuvB subunits; this complex drives branch migration. In the full resolvosome a probable DNA-RuvA(4)-RuvB(12)-RuvC(2) complex forms which resolves the HJ.

It is found in the cytoplasm. It catalyses the reaction ATP + H2O = ADP + phosphate + H(+). Functionally, the RuvA-RuvB-RuvC complex processes Holliday junction (HJ) DNA during genetic recombination and DNA repair, while the RuvA-RuvB complex plays an important role in the rescue of blocked DNA replication forks via replication fork reversal (RFR). RuvA specifically binds to HJ cruciform DNA, conferring on it an open structure. The RuvB hexamer acts as an ATP-dependent pump, pulling dsDNA into and through the RuvAB complex. RuvB forms 2 homohexamers on either side of HJ DNA bound by 1 or 2 RuvA tetramers; 4 subunits per hexamer contact DNA at a time. Coordinated motions by a converter formed by DNA-disengaged RuvB subunits stimulates ATP hydrolysis and nucleotide exchange. Immobilization of the converter enables RuvB to convert the ATP-contained energy into a lever motion, pulling 2 nucleotides of DNA out of the RuvA tetramer per ATP hydrolyzed, thus driving DNA branch migration. The RuvB motors rotate together with the DNA substrate, which together with the progressing nucleotide cycle form the mechanistic basis for DNA recombination by continuous HJ branch migration. Branch migration allows RuvC to scan DNA until it finds its consensus sequence, where it cleaves and resolves cruciform DNA. This is Holliday junction branch migration complex subunit RuvB from Photobacterium profundum (strain SS9).